Here is a 344-residue protein sequence, read N- to C-terminus: Dihydroorotase (344 aa).

Histidine 13 and histidine 15 together coordinate Zn(2+). Substrate is bound by residues 15–17 and asparagine 41; that span reads HFR. Positions 98, 135, and 173 each coordinate Zn(2+). Residue lysine 98 is modified to N6-carboxylysine. Position 135 (histidine 135) interacts with substrate. Leucine 218 contributes to the substrate binding site. A Zn(2+)-binding site is contributed by aspartate 246. The active site involves aspartate 246. Histidine 250 and alanine 262 together coordinate substrate.

It belongs to the metallo-dependent hydrolases superfamily. DHOase family. Class II DHOase subfamily. As to quaternary structure, homodimer. Zn(2+) is required as a cofactor.

It carries out the reaction (S)-dihydroorotate + H2O = N-carbamoyl-L-aspartate + H(+). It participates in pyrimidine metabolism; UMP biosynthesis via de novo pathway; (S)-dihydroorotate from bicarbonate: step 3/3. Catalyzes the reversible cyclization of carbamoyl aspartate to dihydroorotate. This Shewanella woodyi (strain ATCC 51908 / MS32) protein is Dihydroorotase.